We begin with the raw amino-acid sequence, 174 residues long: Peptide methionine sulfoxide reductase MsrA (174 aa).

Residue Cys11 is part of the active site.

Belongs to the MsrA Met sulfoxide reductase family.

The catalysed reaction is L-methionyl-[protein] + [thioredoxin]-disulfide + H2O = L-methionyl-(S)-S-oxide-[protein] + [thioredoxin]-dithiol. It carries out the reaction [thioredoxin]-disulfide + L-methionine + H2O = L-methionine (S)-S-oxide + [thioredoxin]-dithiol. Functionally, has an important function as a repair enzyme for proteins that have been inactivated by oxidation. Catalyzes the reversible oxidation-reduction of methionine sulfoxide in proteins to methionine. In Haloquadratum walsbyi (strain DSM 16790 / HBSQ001), this protein is Peptide methionine sulfoxide reductase MsrA.